Here is a 591-residue protein sequence, read N- to C-terminus: Aspartate--tRNA(Asp/Asn) ligase (591 aa).

Position 175 (E175) interacts with L-aspartate. The tract at residues 199-202 is aspartate; the sequence is QQFK. L-aspartate-binding residues include R221 and H453. 221–223 provides a ligand contact to ATP; that stretch reads RDE. E486 serves as a coordination point for ATP. R493 serves as a coordination point for L-aspartate. Residue 538–541 coordinates ATP; sequence GIDR.

The protein belongs to the class-II aminoacyl-tRNA synthetase family. Type 1 subfamily. Homodimer.

The protein resides in the cytoplasm. The catalysed reaction is tRNA(Asx) + L-aspartate + ATP = L-aspartyl-tRNA(Asx) + AMP + diphosphate. In terms of biological role, aspartyl-tRNA synthetase with relaxed tRNA specificity since it is able to aspartylate not only its cognate tRNA(Asp) but also tRNA(Asn). Reaction proceeds in two steps: L-aspartate is first activated by ATP to form Asp-AMP and then transferred to the acceptor end of tRNA(Asp/Asn). The protein is Aspartate--tRNA(Asp/Asn) ligase of Paracoccus denitrificans (strain Pd 1222).